Reading from the N-terminus, the 243-residue chain is R-spondin-2 (243 aa).

The signal sequence occupies residues M1–C21. Intrachain disulfides connect C40–C46, C43–C52, C55–C74, C78–C93, C96–C104, C101–C110, C113–C124, C128–C141, C145–C187, C156–C163, and C196–C203. The stretch at M90–P134 is one FU repeat. The TSP type-1 domain maps to G144–P204. Residue N160 is glycosylated (N-linked (GlcNAc...) asparagine). A compositionally biased stretch (basic residues) spans P204–L224. The interval P204–Q243 is disordered.

This sequence belongs to the R-spondin family. In terms of assembly, interacts with WNT1. Binds heparin. Interacts with LGR4, LGR5 and LGR6. Interacts with E3 ubiquitin ligases RNF43 and ZNRF3.

The protein resides in the secreted. Its function is as follows. Activator of the canonical Wnt signaling pathway by acting as a ligand for LGR4-6 receptors. Upon binding to LGR4-6 (LGR4, LGR5 or LGR6), LGR4-6 associate with phosphorylated LRP6 and frizzled receptors that are activated by extracellular Wnt receptors, triggering the canonical Wnt signaling pathway to increase expression of target genes. Also regulates the canonical Wnt/beta-catenin-dependent pathway and non-canonical Wnt signaling by acting as an inhibitor of ZNRF3, an important regulator of the Wnt signaling pathway. During embryonic development, plays a crucial role in limb specification, amplifying the Wnt signaling pathway independently of LGR4-6 receptors, possibly by acting as a direct antagonistic ligand to RNF43 and ZNRF3, hence governing the number of limbs an embryo should form. The polypeptide is R-spondin-2 (RSPO2) (Homo sapiens (Human)).